The following is a 316-amino-acid chain: HPr kinase/phosphorylase (316 aa).

Catalysis depends on residues H143 and K164. 158–165 (GEAGSGKS) is a binding site for ATP. A Mg(2+)-binding site is contributed by S165. D182 acts as the Proton acceptor; for phosphorylation activity. Proton donor; for dephosphorylation activity in catalysis. Residues 206 to 215 (LEVRGLGVLN) form an important for the catalytic mechanism of both phosphorylation and dephosphorylation region. E207 is a Mg(2+) binding site. The active site involves R251. An important for the catalytic mechanism of dephosphorylation region spans residues 272-277 (PVMPGR).

The protein belongs to the HPrK/P family. In terms of assembly, homohexamer. It depends on Mg(2+) as a cofactor.

The catalysed reaction is [HPr protein]-L-serine + ATP = [HPr protein]-O-phospho-L-serine + ADP + H(+). The enzyme catalyses [HPr protein]-O-phospho-L-serine + phosphate + H(+) = [HPr protein]-L-serine + diphosphate. Its function is as follows. Catalyzes the ATP- as well as the pyrophosphate-dependent phosphorylation of a specific serine residue in HPr, a phosphocarrier protein of the phosphoenolpyruvate-dependent sugar phosphotransferase system (PTS). HprK/P also catalyzes the pyrophosphate-producing, inorganic phosphate-dependent dephosphorylation (phosphorolysis) of seryl-phosphorylated HPr (P-Ser-HPr). The chain is HPr kinase/phosphorylase from Stenotrophomonas maltophilia (strain R551-3).